Consider the following 269-residue polypeptide: Myelin protein zero-like protein 1 (269 aa).

The N-terminal stretch at 1–35 (MAAPAGAGALIASPDRRRCLWSVLAAALGLLTYGV) is a signal peptide. The 111-residue stretch at 36 to 146 (SALEVYTPKE…VKNPPDIVVQ (111 aa)) folds into the Ig-like V-type domain. The Extracellular portion of the chain corresponds to 36-162 (SALEVYTPKE…YVVEKEILPA (127 aa)). Asparagine 50, asparagine 64, and asparagine 130 each carry an N-linked (GlcNAc...) asparagine glycan. A disulfide bridge connects residues cysteine 58 and cysteine 135. Residues 163 to 183 (FPVWVVVGIVTAVVLGLTLLI) traverse the membrane as a helical segment. At 184-269 (TMILAVIYRR…SVVYADIRKN (86 aa)) the chain is on the cytoplasmic side. Positions 202-238 (GCNTSENVSPVKQVSRKSPSDTEGLVKSLPSGSHQGP) are disordered. Polar residues predominate over residues 203 to 213 (CNTSENVSPVK). Phosphoserine is present on residues serine 206, serine 210, serine 219, and serine 221. An ITIM motif 1 motif is present at residues 239–244 (VIYAQL). Tyrosine 241 carries the phosphotyrosine modification. Serine 260 is modified (phosphoserine). An ITIM motif 2 motif is present at residues 261-266 (VVYADI). The residue at position 263 (tyrosine 263) is a Phosphotyrosine.

The protein belongs to the myelin P0 protein family. In terms of assembly, interacts with phosphorylated PTPN11/SHP-2. Post-translationally, phosphorylated on tyrosine residues upon stimulation with pervanadate and concanavalin-A (ConA). Phosphorylation at Tyr-241 and Tyr-263 is required for interaction with PTPN11/SHP-2. Dephosphorylated by PTPN11/SHP-2 (in vitro). N-glycosylated.

It localises to the membrane. Its function is as follows. Cell surface receptor, which is involved in signal transduction processes. Recruits PTPN11/SHP-2 to the cell membrane and is a putative substrate of PTPN11/SHP-2. Is a major receptor for concanavalin-A (ConA) and is involved in cellular signaling induced by ConA, which probably includes Src family tyrosine-protein kinases. May be involved in regulation of integrin-mediated cell motility. The polypeptide is Myelin protein zero-like protein 1 (MPZL1) (Bos taurus (Bovine)).